The chain runs to 277 residues: MAFIIRAQNVSFCYSEGESKSPPVLKDINLQFEKGQFIGIIGHNGSGKSTLAKHFNALLLPTKGNVYVKDMDTKDAKHLWDIRQTAGLVFQNPDNQIVAAIVEEDVAFGPENLGIPPEEIRKRVEYALKAVGMWEYKDFPPHMLSGGQKQRVAIAGIIAMKPECIVLDEPTAMLDPIGRREVISTIKKLNKEEGITVILITHFMEEVVDADRVIVMDDGKVVLDGTPKEVFKEVEVLKKIGLDVPQVTELAHQLRKEGIDIPSDILTIEEMVEFICR.

Residues 5 to 243 (IRAQNVSFCY…VEVLKKIGLD (239 aa)) enclose the ABC transporter domain. Residue 42–49 (GHNGSGKS) participates in ATP binding.

This sequence belongs to the ABC transporter superfamily. Energy-coupling factor EcfA family. As to quaternary structure, forms a stable energy-coupling factor (ECF) transporter complex composed of 2 membrane-embedded substrate-binding proteins (S component), 2 ATP-binding proteins (A component) and 2 transmembrane proteins (T component).

Its subcellular location is the cell membrane. ATP-binding (A) component of a common energy-coupling factor (ECF) ABC-transporter complex. Unlike classic ABC transporters this ECF transporter provides the energy necessary to transport a number of different substrates. The sequence is that of Energy-coupling factor transporter ATP-binding protein EcfA1 from Caldanaerobacter subterraneus subsp. tengcongensis (strain DSM 15242 / JCM 11007 / NBRC 100824 / MB4) (Thermoanaerobacter tengcongensis).